The chain runs to 56 residues: U4-myrmicitoxin-Tb1a (56 aa).

The signal sequence occupies residues 1–26; sequence MQPSYLLLTFAIIFVMVIMYSPAVEA. The propeptide occupies 27-40; the sequence is KAGADADADAHADA. Glycine 53 carries the glycine amide modification.

Post-translationally, contains 1 disulfide bond. Expressed by the venom gland.

The protein localises to the secreted. Its function is as follows. Venom protein with unknown function. Does not induce paralysis when a high dose is administered by intrathoracic injection into the blowfly Lucilia caesar. This is U4-myrmicitoxin-Tb1a from Tetramorium bicarinatum (Tramp ant).